The chain runs to 347 residues: Histidinol-phosphate aminotransferase (347 aa).

Lysine 209 carries the post-translational modification N6-(pyridoxal phosphate)lysine.

The protein belongs to the class-II pyridoxal-phosphate-dependent aminotransferase family. Histidinol-phosphate aminotransferase subfamily. Homodimer. It depends on pyridoxal 5'-phosphate as a cofactor.

The enzyme catalyses L-histidinol phosphate + 2-oxoglutarate = 3-(imidazol-4-yl)-2-oxopropyl phosphate + L-glutamate. It functions in the pathway amino-acid biosynthesis; L-histidine biosynthesis; L-histidine from 5-phospho-alpha-D-ribose 1-diphosphate: step 7/9. This is Histidinol-phosphate aminotransferase from Geotalea uraniireducens (strain Rf4) (Geobacter uraniireducens).